The chain runs to 521 residues: Phospholipase C B (521 aa).

Residues 1–39 (MGSEHPVDGMTRRQFFAKAAAATTAGAFMSLAGPIIEKA) constitute a signal peptide (tat-type signal). Positions 501–521 (FPQSMPTQETAPTRGIPSGLC) are disordered.

This sequence belongs to the bacterial phospholipase C family. Predicted to be exported by the Tat system. The position of the signal peptide cleavage has not been experimentally proven.

The protein localises to the secreted. The protein resides in the cell wall. It carries out the reaction a 1,2-diacyl-sn-glycero-3-phosphocholine + H2O = phosphocholine + a 1,2-diacyl-sn-glycerol + H(+). Involved in virulence. Induces cytotoxic effects on mouse macrophage cell lines, via direct or indirect enzymatic hydrolysis of cell membrane phospholipids. Hydrolyzes phosphatidylcholine. This chain is Phospholipase C B, found in Mycobacterium tuberculosis (strain CDC 1551 / Oshkosh).